A 245-amino-acid polypeptide reads, in one-letter code: Hydrolase pyvD (245 aa).

Active-site residues include Cys-133, Asp-179, and His-211.

It belongs to the dienelactone hydrolase family.

It functions in the pathway secondary metabolite biosynthesis. Functionally, hydrolase; part of the gene cluster that mediates the biosynthesis of pyranoviolin A, a pyranonigrin analog with a C-3 methoxy group. Initially, the PKS portion of pyvA synthesizes C-10 carbon chain from 5 molecules of malonyl-CoA, which is then condensed with the thiolation (T) domain-bound glycine activated by the adenylation (A) domain. The subsequent chain release by Dieckmann condensation (DKC) could be catalyzed by the TE domain present at the C-terminus of pyvA and/or the alpha/beta hydrolase pyvD, installing the tetramic acid moiety. The FAD-dependent monooxygenase pyvC next epoxidizes one of the olefins of the polyketide part, and the epoxide ring-opening induces the dihydro-gamma-pyrone ring formation. The cytochrome P450 monooxygeanse pyvB would be responsible for the 2 consecutive reactions, in which the dihydro-gamma-pyrone is oxidized to gamma-pyrone and C-7 is hydroxylated to yield pyranonigrin F. Finally, the O-methyltransferase pyvH methylates the C-3 hydroxy group to complete the biosynthesis. The protein is Hydrolase pyvD of Aspergillus violaceofuscus (strain CBS 115571).